A 243-amino-acid chain; its full sequence is Segregation and condensation protein A (243 aa).

Belongs to the ScpA family. As to quaternary structure, component of a cohesin-like complex composed of ScpA, ScpB and the Smc homodimer, in which ScpA and ScpB bind to the head domain of Smc. The presence of the three proteins is required for the association of the complex with DNA.

It is found in the cytoplasm. Functionally, participates in chromosomal partition during cell division. May act via the formation of a condensin-like complex containing Smc and ScpB that pull DNA away from mid-cell into both cell halves. The polypeptide is Segregation and condensation protein A (Thermoanaerobacter pseudethanolicus (strain ATCC 33223 / 39E) (Clostridium thermohydrosulfuricum)).